Consider the following 267-residue polypeptide: Indole-3-glycerol phosphate synthase (267 aa).

It belongs to the TrpC family.

The enzyme catalyses 1-(2-carboxyphenylamino)-1-deoxy-D-ribulose 5-phosphate + H(+) = (1S,2R)-1-C-(indol-3-yl)glycerol 3-phosphate + CO2 + H2O. It participates in amino-acid biosynthesis; L-tryptophan biosynthesis; L-tryptophan from chorismate: step 4/5. This is Indole-3-glycerol phosphate synthase from Polynucleobacter asymbioticus (strain DSM 18221 / CIP 109841 / QLW-P1DMWA-1) (Polynucleobacter necessarius subsp. asymbioticus).